The chain runs to 455 residues: Growth/differentiation factor 6 (455 aa).

Positions 1–22 (MDTPRVLLSAVFLISFLWDLPG) are cleaved as a signal peptide. Residues 23–335 (FQQASISSSS…LPSPGRRRRR (313 aa)) constitute a propeptide that is removed on maturation. Positions 29–93 (SSSSSSAELG…EPPGRGPRVV (65 aa)) are disordered. A compositionally biased stretch (basic and acidic residues) spans 45-76 (SRKEGKMQRAPRDSDAGREGQEPQPRPQDEPR). Over residues 77 to 91 (AQQPRAQEPPGRGPR) the composition is skewed to low complexity. N-linked (GlcNAc...) asparagine glycosylation is present at N114. 2 disordered regions span residues 244 to 267 (EAEA…GFGR) and 300 to 351 (AEAA…KKSR). The span at 330 to 351 (GRRRRRTAFASRHGKRHGKKSR) shows a compositional bias: basic residues. 3 disulfide bridges follow: C354-C420, C383-C452, and C387-C454.

This sequence belongs to the TGF-beta family. As to quaternary structure, homodimer; disulfide-linked.

Its subcellular location is the secreted. Functionally, growth factor that controls proliferation and cellular differentiation in the retina and bone formation. Plays a key role in regulating apoptosis during retinal development. Establishes dorsal-ventral positional information in the retina and controls the formation of the retinotectal map. Required for normal formation of bones and joints in the limbs, skull, digits and axial skeleton. Plays a key role in establishing boundaries between skeletal elements during development. Regulation of GDF6 expression seems to be a mechanism for evolving species-specific changes in skeletal structures. Seems to positively regulate differentiation of chondrogenic tissue through the growth factor receptors subunits BMPR1A, BMPR1B, BMPR2 and ACVR2A, leading to the activation of SMAD1-SMAD5-SMAD8 complex. The regulation of chondrogenic differentiation is inhibited by NOG. Also involved in the induction of adipogenesis from mesenchymal stem cells. This mechanism acts through the growth factor receptors subunits BMPR1A, BMPR2 and ACVR2A and the activation of SMAD1-SMAD5-SMAD8 complex and MAPK14/p38. This chain is Growth/differentiation factor 6 (GDF6), found in Homo sapiens (Human).